Consider the following 30-residue polypeptide: U5-ctenitoxin-Pk1b (30 aa).

2 cysteine pairs are disulfide-bonded: Cys-6-Cys-23 and Cys-13-Cys-29.

This sequence belongs to the neurotoxin 04 (omega-agtx) family. 02 (Tx1) subfamily. As to expression, expressed by the venom gland.

The protein localises to the secreted. In terms of biological role, lethal neurotoxin. Causes spastic paralysis and death in mice in 4-6 minutes after intracerebroventricular injection at dose levels of 1.5 ug per mouse. This is U5-ctenitoxin-Pk1b from Phoneutria keyserlingi (Brazilian wandering spider).